The sequence spans 346 residues: Enkurin domain-containing protein 1 (346 aa).

Residues 1–35 (MCEGPSRISGPIPPDPTLCPDNYRRPTSAQGRLEG) are disordered. Phosphoserine is present on Ser-91. Positions 91-171 (SLKRKDPKDH…AHFLRAHSRC (81 aa)) are required for binding to microtubules. The segment covering 114 to 125 (RFREQERSREQG) has biased composition (basic and acidic residues). Disordered regions lie at residues 114-137 (RFREQERSREQGQPRPLKALWRSP), 167-197 (AHSRCGPGLPPPHVSSPQPTPPGPEAKEPGL), and 260-280 (AEARKQSQPDPAMPPGHTRMP). Ser-136 carries the phosphoserine modification. Positions 174–190 (GLPPPHVSSPQPTPPGP) are enriched in pro residues. The region spanning 251 to 343 (ERRDLWRREA…IFSRPKVFVK (93 aa)) is the Enkurin domain.

In terms of assembly, interacts with alpha-tubulin. Interacts (via central region) with CCP110 (via N-terminal region); competes with CEP97 for binding to CCP110.

The protein resides in the cytoplasm. The protein localises to the cytoskeleton. It localises to the microtubule organizing center. Its subcellular location is the centrosome. It is found in the centriole. The protein resides in the cilium basal body. The protein localises to the cell projection. It localises to the cilium. Its subcellular location is the spindle. It is found in the spindle pole. The protein resides in the cilium axoneme. Microtubule-binding protein which regulates microtubule organization and stability. Promotes the stability of astral microtubules and facilitates the proper orientation of the mitotic spindle. This allows the oriented division of basal keratinocytes and contributes to epidermal stratification. Required for the assembly of both primary and motile cilia. Destabilizes the interaction between CCP110 and CEP97 by competing with CEP97 for binding to CCP110 which promotes the removal of CCP110 and CEP97 from the mother centriole and allows the initiation of ciliogenesis. The protein is Enkurin domain-containing protein 1 (ENKD1) of Homo sapiens (Human).